A 396-amino-acid chain; its full sequence is Phosphoglycerate kinase (396 aa).

Substrate-binding positions include Asp22–Asn24, Arg37, His60–Arg63, Arg118, and Arg151. Residues Lys201, Glu322, and Gly352 to Ser355 each bind ATP.

Belongs to the phosphoglycerate kinase family. In terms of assembly, monomer.

The protein resides in the cytoplasm. It carries out the reaction (2R)-3-phosphoglycerate + ATP = (2R)-3-phospho-glyceroyl phosphate + ADP. It participates in carbohydrate degradation; glycolysis; pyruvate from D-glyceraldehyde 3-phosphate: step 2/5. The sequence is that of Phosphoglycerate kinase from Wolbachia pipientis subsp. Culex pipiens (strain wPip).